The chain runs to 317 residues: UV DNA damage endonuclease (317 aa).

It belongs to the uve1/UvsE family.

Functionally, component in a DNA repair pathway. Removal of UV LIGHT damaged nucleotides. Recognizes pyrimidine dimers and cleave a phosphodiester bond immediately 5' to the lesion. This Bacillus cereus (strain ATCC 10987 / NRS 248) protein is UV DNA damage endonuclease.